The following is a 148-amino-acid chain: Nucleoside diphosphate kinase (148 aa).

The ATP site is built by lysine 9, phenylalanine 57, arginine 85, threonine 91, arginine 102, and asparagine 112. At threonine 91 the chain carries Phosphothreonine. The Pros-phosphohistidine intermediate role is filled by histidine 115. Serine 122 bears the Phosphoserine mark.

It belongs to the NDK family. In terms of assembly, homotetramer. Mg(2+) serves as cofactor.

It localises to the cytoplasm. The enzyme catalyses a 2'-deoxyribonucleoside 5'-diphosphate + ATP = a 2'-deoxyribonucleoside 5'-triphosphate + ADP. It catalyses the reaction a ribonucleoside 5'-diphosphate + ATP = a ribonucleoside 5'-triphosphate + ADP. In terms of biological role, major role in the synthesis of nucleoside triphosphates other than ATP. The ATP gamma phosphate is transferred to the NDP beta phosphate via a ping-pong mechanism, using a phosphorylated active-site intermediate. The chain is Nucleoside diphosphate kinase from Bacillus anthracis.